The chain runs to 3078 residues: Probable polyketide synthase 44 (3078 aa).

In terms of domain architecture, Ketosynthase family 3 (KS3) spans 10–435 (DNDVAIIGIG…GSNACLILTE (426 aa)). Residues Cys-175, His-320, and His-358 each act as for beta-ketoacyl synthase activity in the active site. The segment at 627-660 (GILASISIGHSLGEVSSAVCSGMIDLETGCFIIY) is acyl/malonyl transferase. Ser-637 (for acyl/malonyl transferase activity) is an active-site residue. The segment at 952–1072 (TNHLGYRNER…GRLSTTKHND (121 aa)) is N-terminal hotdog fold. Positions 952–1239 (TNHLGYRNER…YTQLTPYKNQ (288 aa)) constitute a PKS/mFAS DH domain. His-984 functions as the Proton acceptor; for dehydratase activity in the catalytic mechanism. Residues 1088 to 1239 (NFVTIQKKEL…YTQLTPYKNQ (152 aa)) form a C-terminal hotdog fold region. Asp-1150 serves as the catalytic Proton donor; for dehydratase activity. The stretch at 2080–2119 (LENIKTDLSNKNDNNNNNNNNNNDNKESNIKELLDNDDDE) forms a coiled coil. Positions 2087 to 2108 (LSNKNDNNNNNNNNNNDNKESN) are disordered. Residues 2090 to 2102 (KNDNNNNNNNNNN) are compositionally biased toward low complexity. The Carrier domain maps to 2558–2636 (SDDLSIREQI…QLIQSVTDAM (79 aa)). Residue Ser-2596 is modified to O-(pantetheine 4'-phosphoryl)serine. Residues 2694–2714 (NTVFLTGSSGFIGIYILFYLI) traverse the membrane as a helical segment.

The cofactor is pantetheine 4'-phosphate.

It localises to the membrane. Probable polyketide synthase. The sequence is that of Probable polyketide synthase 44 (pks44) from Dictyostelium discoideum (Social amoeba).